The following is a 471-amino-acid chain: Tryptophanase (471 aa).

Residues Lys-5, Lys-115, and Lys-156 each carry the N6-acetyllysine modification. Lys-270 carries the post-translational modification N6-(pyridoxal phosphate)lysine. Lys-450 carries the N6-acetyllysine modification.

It belongs to the beta-eliminating lyase family. As to quaternary structure, homotetramer. Requires pyridoxal 5'-phosphate as cofactor.

It carries out the reaction L-tryptophan + H2O = indole + pyruvate + NH4(+). Its pathway is amino-acid degradation; L-tryptophan degradation via pyruvate pathway; indole and pyruvate from L-tryptophan: step 1/1. The protein is Tryptophanase of Escherichia coli O9:H4 (strain HS).